Reading from the N-terminus, the 421-residue chain is Thymidine phosphorylase (421 aa).

This sequence belongs to the thymidine/pyrimidine-nucleoside phosphorylase family. Homodimer.

The enzyme catalyses thymidine + phosphate = 2-deoxy-alpha-D-ribose 1-phosphate + thymine. Functionally, the enzymes which catalyze the reversible phosphorolysis of pyrimidine nucleosides are involved in the degradation of these compounds and in their utilization as carbon and energy sources, or in the rescue of pyrimidine bases for nucleotide synthesis. The sequence is that of Thymidine phosphorylase (deoA) from Mycoplasma genitalium (strain ATCC 33530 / DSM 19775 / NCTC 10195 / G37) (Mycoplasmoides genitalium).